The following is an 878-amino-acid chain: Protein translocase subunit SecA (878 aa).

ATP contacts are provided by residues glutamine 81, glycine 99–threonine 103, and aspartate 489.

Belongs to the SecA family.

The protein resides in the plastid. The protein localises to the chloroplast stroma. It is found in the chloroplast thylakoid membrane. It carries out the reaction ATP + H2O + cellular proteinSide 1 = ADP + phosphate + cellular proteinSide 2.. Has a central role in coupling the hydrolysis of ATP to the transfer of proteins across the thylakoid membrane. This Thalassiosira pseudonana (Marine diatom) protein is Protein translocase subunit SecA.